We begin with the raw amino-acid sequence, 196 residues long: Peptidyl-tRNA hydrolase (196 aa).

Residue Tyr-18 coordinates tRNA. Residue His-23 is the Proton acceptor of the active site. Phe-69, Asn-71, and Asn-117 together coordinate tRNA.

It belongs to the PTH family. Monomer.

It localises to the cytoplasm. It carries out the reaction an N-acyl-L-alpha-aminoacyl-tRNA + H2O = an N-acyl-L-amino acid + a tRNA + H(+). Hydrolyzes ribosome-free peptidyl-tRNAs (with 1 or more amino acids incorporated), which drop off the ribosome during protein synthesis, or as a result of ribosome stalling. Its function is as follows. Catalyzes the release of premature peptidyl moieties from peptidyl-tRNA molecules trapped in stalled 50S ribosomal subunits, and thus maintains levels of free tRNAs and 50S ribosomes. The sequence is that of Peptidyl-tRNA hydrolase from Vibrio cholerae serotype O1 (strain ATCC 39315 / El Tor Inaba N16961).